The following is a 243-amino-acid chain: Ubiquinone biosynthesis O-methyltransferase (243 aa).

4 residues coordinate S-adenosyl-L-methionine: Arg-45, Gly-65, Asp-86, and Leu-130.

Belongs to the methyltransferase superfamily. UbiG/COQ3 family.

It carries out the reaction a 3-demethylubiquinol + S-adenosyl-L-methionine = a ubiquinol + S-adenosyl-L-homocysteine + H(+). The catalysed reaction is a 3-(all-trans-polyprenyl)benzene-1,2-diol + S-adenosyl-L-methionine = a 2-methoxy-6-(all-trans-polyprenyl)phenol + S-adenosyl-L-homocysteine + H(+). The protein operates within cofactor biosynthesis; ubiquinone biosynthesis. Functionally, O-methyltransferase that catalyzes the 2 O-methylation steps in the ubiquinone biosynthetic pathway. The polypeptide is Ubiquinone biosynthesis O-methyltransferase (Idiomarina loihiensis (strain ATCC BAA-735 / DSM 15497 / L2-TR)).